The chain runs to 95 residues: MRSPYDVLKKPVITERSMDLAQENKYTFVVEPKANKIEIKHAVEQLFNVKVLDVHTMNVKGKPKRMGKYAGRTADKKKAIVTLKEGDKIEIFEGV.

It belongs to the universal ribosomal protein uL23 family. As to quaternary structure, part of the 50S ribosomal subunit. Contacts protein L29, and trigger factor when it is bound to the ribosome.

Functionally, one of the early assembly proteins it binds 23S rRNA. One of the proteins that surrounds the polypeptide exit tunnel on the outside of the ribosome. Forms the main docking site for trigger factor binding to the ribosome. The protein is Large ribosomal subunit protein uL23 of Heliobacterium modesticaldum (strain ATCC 51547 / Ice1).